Here is a 114-residue protein sequence, read N- to C-terminus: Cuticle protein AMP5 (114 aa).

The residue at position 1 (Q1) is a Pyrrolidone carboxylic acid. The Chitin-binding type R&amp;R domain occupies 18 to 83 (AGNYFYEFET…VDSPLIPVAP (66 aa)).

Arthrodial membrane.

In Homarus americanus (American lobster), this protein is Cuticle protein AMP5.